A 1762-amino-acid chain; its full sequence is Kinase D-interacting substrate of 220 kDa (1762 aa).

Topologically, residues 1–508 are cytoplasmic; it reads MSVLISQSVI…WLIVFLTLLL (508 aa). 11 ANK repeats span residues 45–74, 78–107, 111–140, 145–174, 178–207, 211–240, 244–273, 277–306, 310–339, 343–372, and 376–405; these read AAEQ…NWTA, ASKE…GWTA, ACYK…SVYP, AGRG…TTPL, ARKG…MTAL, VKGG…NTAL, SKEG…DTVL, VRGG…KTAL, VEKG…ETPL, TKMR…DTPL, and IRGR…KAGE. The KAP NTPase domain maps to 440 to 953; that stretch reads YDLYSSALAD…NIVSVTGRLL (514 aa). Residues 509-529 traverse the membrane as a helical segment; that stretch reads CGGLGLVFAFTVDTNLAIAIS. Over 530 to 533 the chain is Extracellular; the sequence is LSFL. A helical transmembrane segment spans residues 534-554; it reads ALIYIFFIVIYFGGRREGESW. At 555 to 668 the chain is on the cytoplasmic side; it reads NWAWALSTRL…SFVIFLFIVG (114 aa). The helical transmembrane segment at 669–689 threads the bilayer; sequence CIIAGITLLAIFRVDPKHLTV. Residues 690–696 are Extracellular-facing; that stretch reads NAILISI. Residues 697 to 717 traverse the membrane as a helical segment; sequence ASVVGLAFVLNCRTWWQVLDS. Topologically, residues 718–1680 are cytoplasmic; the sequence is LLNSQRKRLH…TPSTVTLNNN (963 aa). Residues Ser-882 and Ser-885 each carry the phosphoserine modification. Thr-914 is subject to Phosphothreonine. Ser-918 is modified (phosphoserine; by PKD). The tract at residues 1089–1092 is mediates interaction with CRKL; that stretch reads PRPP. Phosphoserine occurs at positions 1163, 1288, 1344, 1351, 1353, 1354, and 1357. 4 disordered regions span residues 1279–1305, 1336–1358, 1390–1440, and 1452–1556; these read DPRF…HTEL, RHSN…LNSQ, EGGT…DGRK, and YSSS…EPIR. Positions 1338 to 1350 are enriched in polar residues; sequence SNLSWQSQTRRTP. Positions 1395–1422 are enriched in low complexity; sequence SSTISGRSSPHSTYYIGQSSSGGSIHST. Basic and acidic residues predominate over residues 1423-1440; sequence LEQERGKEGELKQEDGRK. The segment covering 1452-1462 has biased composition (polar residues); the sequence is YSSSGVSTNEA. Ser-1513, Ser-1518, Ser-1547, and Ser-1566 each carry phosphoserine. Residues 1514-1524 are compositionally biased toward acidic residues; the sequence is DEDESGTEESD. Residues 1529–1553 are compositionally biased toward basic and acidic residues; it reads LKDDKDKKAEGKAERVCKSPEHSAE. A disordered region spans residues 1571-1628; sequence DKKDSSDSGVRSNESSPNHSLHNEAADDSQLEKANLIELEDEGHSGKRGMPHSLSGLQ. Over residues 1579–1590 the composition is skewed to polar residues; the sequence is GVRSNESSPNHS. Phosphoserine occurs at positions 1615 and 1625. Phosphothreonine is present on Thr-1671. Phosphoserine is present on Ser-1673. Position 1676 is a phosphothreonine (Thr-1676). The interval 1704–1762 is disordered; sequence ILRPGPSPNPTAVQNENLKSMAHKRSQRSSYTRLSKDASELHAASSESTGFGEERESIL. Positions 1757 to 1762 match the PDZ-binding motif; sequence ERESIL.

Found in a complex, at least composed of KIDINS220, MAGI2, NTRK1 and RAPGEF2; the complex is mainly formed at late endosomes in a nerve growth factor (NGF)-dependent manner. Interacts with RAPGEF2; the interaction is strengthened after NGF stimulation. Isoform 2 interacts (via C-terminal domain) with MAGI2 isoform 1 (via PDZ domain). Interacts with NTRK1, NTRK2, NTRK3, ERKL and NGFR. Can form a ternary complex with NGFR and NTRK1 and this complex is affected by the expression levels of KIDINS220/ARMS. An increase in KIDINS220/ARMS expression leads to a decreased association of NGFR and NTRK1. Interacts (via PDZ-binding motif) with SNTA1 and SNTB2 (via PDZ domains). Interacts with EPHA4 and PRKD1. Tyrosine phosphorylated by NTRK1, NTRK2, EPHB2 and EPHA4. Phosphorylation at Ser-918 is induced by phorbol ester treatment. Phosphorylation by NTRK2 is induced by brain-derived neurotrophic factor (BDNF) and neurotrophin-4/5. Phosphorylation by NTRK1 is induced by nerve growth factor (NGF). In terms of tissue distribution, expressed in developing nervous system and in highly plastic areas of the adult brain. Also expressed in neuroendocrine cells, where it concentrates at the tip of neurites. Expressed in developing muscle and is concentrated at the neuromuscular junction (NMS). SNTA1 can regulate its localization in the NMS.

It is found in the membrane. The protein resides in the late endosome. Its function is as follows. Promotes a prolonged MAP-kinase signaling by neurotrophins through activation of a Rap1-dependent mechanism. Provides a docking site for the CRKL-C3G complex, resulting in Rap1-dependent sustained ERK activation. May play an important role in regulating postsynaptic signal transduction through the syntrophin-mediated localization of receptor tyrosine kinases such as EPHA4. In cooperation with SNTA1 can enhance EPHA4-induced JAK/STAT activation. Plays a role in nerve growth factor (NGF)-induced recruitment of RAPGEF2 to late endosomes and neurite outgrowth. May play a role in neurotrophin- and ephrin-mediated neuronal outgrowth and in axon guidance during neural development and in neuronal regeneration. This chain is Kinase D-interacting substrate of 220 kDa (Kidins220), found in Rattus norvegicus (Rat).